Here is a 247-residue protein sequence, read N- to C-terminus: ATP synthase subunit a, chloroplastic (247 aa).

5 consecutive transmembrane segments (helical) span residues 38–58, 95–115, 134–154, 199–219, and 220–240; these read QVLI…IVTV, VPFI…GALL, INTT…AGLS, LVVV…VMFL, and GLFT…AYIG.

This sequence belongs to the ATPase A chain family. F-type ATPases have 2 components, CF(1) - the catalytic core - and CF(0) - the membrane proton channel. CF(1) has five subunits: alpha(3), beta(3), gamma(1), delta(1), epsilon(1). CF(0) has four main subunits: a, b, b' and c.

It localises to the plastid. It is found in the chloroplast thylakoid membrane. Its function is as follows. Key component of the proton channel; it plays a direct role in the translocation of protons across the membrane. The polypeptide is ATP synthase subunit a, chloroplastic (Populus alba (White poplar)).